Here is an 87-residue protein sequence, read N- to C-terminus: Small ribosomal subunit protein uS17 (87 aa).

It belongs to the universal ribosomal protein uS17 family. Part of the 30S ribosomal subunit.

Its function is as follows. One of the primary rRNA binding proteins, it binds specifically to the 5'-end of 16S ribosomal RNA. This is Small ribosomal subunit protein uS17 from Geobacillus thermodenitrificans (strain NG80-2).